The sequence spans 463 residues: Chromosomal replication initiator protein DnaA (463 aa).

The segment at 1-83 (MSTNQIILTD…LQLFQHYNNT (83 aa)) is domain I, interacts with DnaA modulators. Residues 83-124 (TIKSIEIITKELPGTTQTVTELPTKTFADIGSSELNSENIFS) are domain II. The interval 125–343 (TLDVRFTFDN…GALNKVIAHS (219 aa)) is domain III, AAA+ region. The ATP site is built by Gly-171, Gly-173, Lys-174, and Thr-175. The interval 344 to 463 (NFTLKEITLE…IHLLMKILQN (120 aa)) is domain IV, binds dsDNA.

The protein belongs to the DnaA family. Oligomerizes as a right-handed, spiral filament on DNA at oriC.

The protein resides in the cytoplasm. In terms of biological role, plays an essential role in the initiation and regulation of chromosomal replication. ATP-DnaA binds to the origin of replication (oriC) to initiate formation of the DNA replication initiation complex once per cell cycle. Binds the DnaA box (a 9 base pair repeat at the origin) and separates the double-stranded (ds)DNA. Forms a right-handed helical filament on oriC DNA; dsDNA binds to the exterior of the filament while single-stranded (ss)DNA is stabiized in the filament's interior. The ATP-DnaA-oriC complex binds and stabilizes one strand of the AT-rich DNA unwinding element (DUE), permitting loading of DNA polymerase. After initiation quickly degrades to an ADP-DnaA complex that is not apt for DNA replication. Binds acidic phospholipids. In Rickettsia africae (strain ESF-5), this protein is Chromosomal replication initiator protein DnaA.